A 520-amino-acid chain; its full sequence is Probable methylmalonate-semialdehyde/malonate-semialdehyde dehydrogenase [acylating], mitochondrial (520 aa).

The NAD(+) site is built by Ala-169, Phe-171, Lys-195, Glu-198, Arg-199, and Ser-248. Cys-303 functions as the Nucleophile in the catalytic mechanism. Glu-403 is an NAD(+) binding site.

This sequence belongs to the aldehyde dehydrogenase family. Homotetramer.

The protein localises to the mitochondrion. It carries out the reaction 2-methyl-3-oxopropanoate + NAD(+) + CoA + H2O = propanoyl-CoA + hydrogencarbonate + NADH + H(+). The catalysed reaction is 3-oxopropanoate + NAD(+) + CoA + H2O = hydrogencarbonate + acetyl-CoA + NADH + H(+). Its function is as follows. Probable malonate and methylmalonate semialdehyde dehydrogenase involved in the catabolism of valine, thymine, and compounds catabolized by way of beta-alanine, including uracil and cytidine. This is Probable methylmalonate-semialdehyde/malonate-semialdehyde dehydrogenase [acylating], mitochondrial from Drosophila melanogaster (Fruit fly).